The chain runs to 36 residues: Photosystem I reaction center subunit VIII (36 aa).

The chain crosses the membrane as a helical span at residues Leu-6 to Leu-28.

This sequence belongs to the PsaI family.

Its subcellular location is the plastid. It is found in the chloroplast thylakoid membrane. Its function is as follows. May help in the organization of the PsaL subunit. The chain is Photosystem I reaction center subunit VIII from Acorus gramineus (Dwarf sweet flag).